We begin with the raw amino-acid sequence, 173 residues long: MATGPRYKVAFRRRREGRTDYHQRLRLLLSREDRVVVRKSARHMQIQLVAPDANGDVTLSSAISKELAKYGYEGSTGNTTAAYLTGLLFGYKTLAEGYESGVLDIGIQASSAGSRVYAALKGVVDSGLDVPHNSSVFPSDERIRGEHVAEYMEGSNLPEVFDAVKEKILAEFS.

This sequence belongs to the universal ribosomal protein uL18 family. As to quaternary structure, part of the 50S ribosomal subunit. Contacts the 5S and 23S rRNAs.

Its function is as follows. This is one of the proteins that bind and probably mediate the attachment of the 5S RNA into the large ribosomal subunit, where it forms part of the central protuberance. This Methanococcoides burtonii (strain DSM 6242 / NBRC 107633 / OCM 468 / ACE-M) protein is Large ribosomal subunit protein uL18.